A 205-amino-acid chain; its full sequence is Recombination protein RecR (205 aa).

A C4-type zinc finger spans residues 59-74 (CSVCFHLSAEPVCEVC). One can recognise a Toprim domain in the interval 82 to 181 (GTLCVVADSR…KVTRIAFGLP (100 aa)).

This sequence belongs to the RecR family.

In terms of biological role, may play a role in DNA repair. It seems to be involved in an RecBC-independent recombinational process of DNA repair. It may act with RecF and RecO. In Cyanothece sp. (strain PCC 7425 / ATCC 29141), this protein is Recombination protein RecR.